The chain runs to 426 residues: 3-phosphoshikimate 1-carboxyvinyltransferase (426 aa).

Residues lysine 22, serine 23, and arginine 27 each contribute to the 3-phosphoshikimate site. Lysine 22 serves as a coordination point for phosphoenolpyruvate. Phosphoenolpyruvate-binding residues include glycine 96 and arginine 124. Residues serine 170, serine 171, glutamine 172, serine 198, aspartate 314, asparagine 337, and lysine 341 each contribute to the 3-phosphoshikimate site. Glutamine 172 contributes to the phosphoenolpyruvate binding site. The active-site Proton acceptor is the aspartate 314. The phosphoenolpyruvate site is built by arginine 345, arginine 387, and lysine 412.

It belongs to the EPSP synthase family. As to quaternary structure, monomer.

It localises to the cytoplasm. It catalyses the reaction 3-phosphoshikimate + phosphoenolpyruvate = 5-O-(1-carboxyvinyl)-3-phosphoshikimate + phosphate. It participates in metabolic intermediate biosynthesis; chorismate biosynthesis; chorismate from D-erythrose 4-phosphate and phosphoenolpyruvate: step 6/7. Catalyzes the transfer of the enolpyruvyl moiety of phosphoenolpyruvate (PEP) to the 5-hydroxyl of shikimate-3-phosphate (S3P) to produce enolpyruvyl shikimate-3-phosphate and inorganic phosphate. The polypeptide is 3-phosphoshikimate 1-carboxyvinyltransferase (Colwellia psychrerythraea (strain 34H / ATCC BAA-681) (Vibrio psychroerythus)).